A 741-amino-acid polypeptide reads, in one-letter code: Double-stranded RNA-specific editase 1 (741 aa).

The disordered stretch occupies residues 1-79; sequence MDIEDEENMS…RRKTPGPVLP (79 aa). The residue at position 26 (Ser-26) is a Phosphoserine. Positions 33 to 49 are enriched in gly residues; it reads PGPGEGSQLSNGGGGGP. Positions 63-73 are enriched in basic residues; it reads SKYRLKKRRKT. The region spanning 78-144 is the DRBM 1 domain; it reads LPKNALMQLN…AEKALRSFVQ (67 aa). 2 interaction with substrate RNA regions span residues 83–88 and 104–105; these read LMQLNE and VH. Ser-149 bears the Phosphoserine mark. The 68-residue stretch at 231–298 folds into the DRBM 2 domain; it reads PSGKNPVMIL…AQSALAAIFN (68 aa). 2 interaction with substrate RNA regions span residues 237–242 and His-259; that span reads VMILNE. The region spanning 370–737 is the A to I editase domain; that stretch reads SVSTGTKCIN…VEKPTEQDQF (368 aa). His-394 provides a ligand contact to Zn(2+). Glu-396 serves as the catalytic Proton donor. Residues Arg-400 and Arg-401 each coordinate 1D-myo-inositol hexakisphosphate. Cys-451 lines the Zn(2+) pocket. Residues 486 to 518 are disordered; that stretch reads RPPGLLSDPSTSTFQGAGTTEPADRHPNRKARG. Positions 493–503 are enriched in polar residues; sequence DPSTSTFQGAG. Cys-556 is a Zn(2+) binding site. 1D-myo-inositol hexakisphosphate is bound by residues Lys-559, Arg-562, Lys-669, Lys-702, Lys-712, and Lys-730.

As to quaternary structure, homodimer. Homodimerization is essential for its catalytic activity. Can form heterodimers with isoform 5 of ADAR/ADAR1. Requires 1D-myo-inositol hexakisphosphate as cofactor. Highly expressed in brain and heart and at lower levels in placenta. Fair expression in lung, liver and kidney. Detected in brain, heart, kidney, lung and liver (at protein level). In terms of tissue distribution, highly expressed in hippocampus and colon. Expressed in pediatric astrocytomas and the protein has a decreased RNA-editing activity. The decrease in RNA editing correlates with the grade of malignancy of the tumors, with the high grade tumors showing lower editing is seen.

It is found in the nucleus. Its subcellular location is the nucleolus. The enzyme catalyses adenosine in double-stranded RNA + H2O + H(+) = inosine in double-stranded RNA + NH4(+). Functionally, catalyzes the hydrolytic deamination of adenosine to inosine in double-stranded RNA (dsRNA) referred to as A-to-I RNA editing. This may affect gene expression and function in a number of ways that include mRNA translation by changing codons and hence the amino acid sequence of proteins; pre-mRNA splicing by altering splice site recognition sequences; RNA stability by changing sequences involved in nuclease recognition; genetic stability in the case of RNA virus genomes by changing sequences during viral RNA replication; and RNA structure-dependent activities such as microRNA production or targeting or protein-RNA interactions. Can edit both viral and cellular RNAs and can edit RNAs at multiple sites (hyper-editing) or at specific sites (site-specific editing). Its cellular RNA substrates include: bladder cancer-associated protein (BLCAP), neurotransmitter receptors for glutamate (GRIA2 and GRIK2) and serotonin (HTR2C), GABA receptor (GABRA3) and potassium voltage-gated channel (KCNA1). Site-specific RNA editing of transcripts encoding these proteins results in amino acid substitutions which consequently alter their functional activities. Edits GRIA2 at both the Q/R and R/G sites efficiently but converts the adenosine in hotspot1 much less efficiently. Can exert a proviral effect towards human immunodeficiency virus type 1 (HIV-1) and enhances its replication via both an editing-dependent and editing-independent mechanism. The former involves editing of adenosines in the 5'UTR while the latter occurs via suppression of EIF2AK2/PKR activation and function. Can inhibit cell proliferation and migration and can stimulate exocytosis. In terms of biological role, has a lower catalytic activity than isoform 2. Its function is as follows. Has a higher catalytic activity than isoform 1. In Homo sapiens (Human), this protein is Double-stranded RNA-specific editase 1.